The sequence spans 205 residues: Outer-membrane lipoprotein LolB (205 aa).

Positions 1 to 17 (MFLRHCITFTLIALLAG) are cleaved as a signal peptide. Residue C18 is the site of N-palmitoyl cysteine attachment. The S-diacylglycerol cysteine moiety is linked to residue C18.

This sequence belongs to the LolB family. In terms of assembly, monomer.

Its subcellular location is the cell outer membrane. Plays a critical role in the incorporation of lipoproteins in the outer membrane after they are released by the LolA protein. This is Outer-membrane lipoprotein LolB from Pseudomonas putida (strain W619).